The following is a 210-amino-acid chain: Adenylate kinase isoenzyme 1 (210 aa).

Residue Gly-30–Thr-35 coordinates ATP. Residues Ser-50 to Val-79 form an NMP region. AMP is bound by residues Ser-51, Arg-56, Ala-77–Val-79, Gly-107–Arg-110, and Gln-114. Positions His-144–Asp-154 are LID. Arg-145 lines the ATP pocket. Arg-151 and Arg-162 together coordinate AMP. Position 190 (Gly-190) interacts with ATP.

It belongs to the adenylate kinase family. AK1 subfamily. In terms of assembly, monomer.

It is found in the cytoplasm. The enzyme catalyses AMP + ATP = 2 ADP. Its function is as follows. Catalyzes the reversible transfer of the terminal phosphate group between ATP and AMP. Plays an important role in cellular energy homeostasis and in adenine nucleotide metabolism. The protein is Adenylate kinase isoenzyme 1 of Caenorhabditis elegans.